The chain runs to 151 residues: MELPEPELIRQSWREVSRSPLEHGTVLFARLFDLEPDLLPLFQYNCRQFSSPEDCLSSPEFLDHIRKVMLVIDAAVTNVEDLSSLEEYLAGLGRKHRAVGVKLSSFSTVGESLLYMLEKCLGPAFTPATRAAWSQLYGAVVQAMSRGWGGE.

One can recognise a Globin domain in the interval M1–G149. Residues H64 and H96 each coordinate heme b.

This sequence belongs to the globin family. In terms of assembly, monomer. Homodimer and homotetramer; disulfide-linked. Mainly monomeric but also detected as part of homodimers and homotetramers. Interacts with 14-3-3 proteins; regulates the phosphorylation of NGB. Could interact (ferrous form) with G-alpha(i) proteins (GTP-bound form). In terms of processing, phosphorylated during hypoxia by ERK1/ERK2. Phosphorylation regulates the heme pocket hexacoordination preventing the association of His-64 with the heme metal center. Thereby, promotes the access of dioxygen and nitrite to the heme and stimulates the nitrite reductase activity. Phosphorylation during hypoxia is stabilized by 14-3-3 proteins.

It is found in the cytoplasm. Its subcellular location is the cytosol. The protein resides in the mitochondrion matrix. The enzyme catalyses Fe(III)-heme b-[protein] + nitric oxide + H2O = Fe(II)-heme b-[protein] + nitrite + 2 H(+). Monomeric globin with a bis-histidyl six-coordinate heme-iron atom through which it can bind dioxygen, carbon monoxide and nitric oxide. Could help transport oxygen and increase its availability to the metabolically active neuronal tissues, though its low quantity in tissues as well as its high affinity for dioxygen, which may limit its oxygen-releasing ability, argue against it. The ferrous/deoxygenated form exhibits a nitrite reductase activity and it could produce nitric oxide which in turn inhibits cellular respiration in response to hypoxia. In its ferrous/deoxygenated state, it may also exhibit GDI (Guanine nucleotide Dissociation Inhibitor) activity toward heterotrimeric G-alpha proteins, thereby regulating signal transduction to facilitate neuroprotective responses in the wake of hypoxia and associated oxidative stress. The protein is Neuroglobin of Bos taurus (Bovine).